The chain runs to 113 residues: Hydrogenase maturation factor HypA 2 (113 aa).

His-2 contacts Ni(2+). Zn(2+) contacts are provided by Cys-73, Cys-76, Cys-89, and Cys-92.

The protein belongs to the HypA/HybF family.

In terms of biological role, involved in the maturation of [NiFe] hydrogenases. Required for nickel insertion into the metal center of the hydrogenase. The protein is Hydrogenase maturation factor HypA 2 of Bradyrhizobium diazoefficiens (strain JCM 10833 / BCRC 13528 / IAM 13628 / NBRC 14792 / USDA 110).